We begin with the raw amino-acid sequence, 143 residues long: High mobility group protein B (143 aa).

The segment at 1-22 (MSKAASQYATLEDLPSKPKRPQ) is disordered. Positions 18–86 (PKRPQTGFFI…TYDKQNDQWK (69 aa)) form a DNA-binding region, HMG box. At A70 the chain carries Blocked amino end (Ala). Composition is skewed to basic and acidic residues over residues 100–120 (AKKALKEKTKKSKAAEKELEK) and 131–143 (AKKDDKKAPAKKK). Residues 100–143 (AKKALKEKTKKSKAAEKELEKSKKKAPAAAPAKKDDKKAPAKKK) are disordered.

It is found in the nucleus. It localises to the chromosome. The protein is High mobility group protein B of Tetrahymena thermophila.